Consider the following 1423-residue polypeptide: Protein phosphatase Slingshot homolog 2 (1423 aa).

Disordered stretches follow at residues 1 to 37 (MALVTVQRSPTPSTTSSPCASEADSGEEECRSQPRSI) and 51 to 70 (LPRGNGSSTPRVSHRRNKHA). The segment covering 9-18 (SPTPSTTSSP) has biased composition (low complexity). A phosphoserine mark is found at serine 17, serine 25, and serine 36. Residues 248–303 (ERTERLIKTKLREIMMQKDLENITSKEIRTELEMQMVCNLREFKEFIDNEMIVILG) form the DEK-C domain. The region spanning 307–448 (SPTQIFEHVF…LEEYQGILLA (142 aa)) is the Tyrosine-protein phosphatase domain. The Phosphocysteine intermediate role is filled by cysteine 392. Residues serine 461, serine 487, serine 534, serine 631, and serine 633 each carry the phosphoserine modification. Disordered regions lie at residues 698–725 (EMAADDQRSSSLSNTPHASEESSVDEDQ), 833–858 (HSSTADLEEEEPVEGEHDWGPGMHSG), 878–950 (RQEQ…HCER), 967–991 (APQDCLGSDSRSKKQEGDLKKQRAV), 1021–1042 (SLGHTEPGGEATPSKEGEKQGL), 1074–1105 (PQVLPLPHSSSECDRPADPNPMLSSPQDKGDC), and 1207–1226 (PEACRIPHSSSSENIRDLSH). A compositionally biased stretch (polar residues) spans 884–904 (HGTASAGPTLSNRKNSKNDSS). 3 stretches are compositionally biased toward basic and acidic residues: residues 910–932 (PKWKSDETTPEHSFFLKEAEPSK), 976–987 (SRSKKQEGDLKK), and 1033–1042 (PSKEGEKQGL). Serine 1217 carries the phosphoserine modification. Threonine 1422 bears the Phosphothreonine mark.

Belongs to the protein-tyrosine phosphatase family. As to quaternary structure, interacts with filamentous actin. Expressed in brain, heart, liver, skeletal muscle, testis and thymus. Also expressed at lower levels in kidney, small intestine and spleen. Within testicular seminiferous tubules expressed in germ cells and spermatocytes, where it has a cytoplasmic localization, and round spermatids, where it concentrates in the acrosomal region next to the nucleus.

Its subcellular location is the cytoplasm. It localises to the cytoskeleton. The protein resides in the cell junction. It is found in the focal adhesion. The protein localises to the cytoplasmic vesicle. Its subcellular location is the secretory vesicle. It localises to the acrosome. The enzyme catalyses O-phospho-L-tyrosyl-[protein] + H2O = L-tyrosyl-[protein] + phosphate. It catalyses the reaction O-phospho-L-seryl-[protein] + H2O = L-seryl-[protein] + phosphate. The catalysed reaction is O-phospho-L-threonyl-[protein] + H2O = L-threonyl-[protein] + phosphate. Functionally, protein phosphatase which regulates actin filament dynamics. Dephosphorylates and activates the actin binding/depolymerizing factor cofilin, which subsequently binds to actin filaments and stimulates their disassembly. Inhibitory phosphorylation of cofilin is mediated by LIMK1, which may also be dephosphorylated and inactivated by this protein. Required for spermatogenesis. Involved in acrosome biogenesis, probably by regulating cofilin-mediated actin cytoskeleton remodeling during proacrosomal vesicle fusion and/or Golgi to perinuclear vesicle trafficking. The polypeptide is Protein phosphatase Slingshot homolog 2 (Ssh2) (Mus musculus (Mouse)).